We begin with the raw amino-acid sequence, 368 residues long: Aminomethyltransferase (368 aa).

The protein belongs to the GcvT family. As to quaternary structure, the glycine cleavage system is composed of four proteins: P, T, L and H.

It catalyses the reaction N(6)-[(R)-S(8)-aminomethyldihydrolipoyl]-L-lysyl-[protein] + (6S)-5,6,7,8-tetrahydrofolate = N(6)-[(R)-dihydrolipoyl]-L-lysyl-[protein] + (6R)-5,10-methylene-5,6,7,8-tetrahydrofolate + NH4(+). Functionally, the glycine cleavage system catalyzes the degradation of glycine. This is Aminomethyltransferase from Alkaliphilus oremlandii (strain OhILAs) (Clostridium oremlandii (strain OhILAs)).